The primary structure comprises 252 residues: Putative cytosolic acyl coenzyme A thioester hydrolase-like (252 aa).

HotDog ACOT-type domains follow at residues 1-90 (MIKE…LSLT) and 146-252 (SYSQ…SVFT).

In terms of assembly, homodimer. As to expression, expressed in all tissues examined. Up-regulated in nasopharyngeal carcinoma (at protein level).

It localises to the cytoplasm. It carries out the reaction hexadecanoyl-CoA + H2O = hexadecanoate + CoA + H(+). Its function is as follows. Acyl-CoA thioesterases are a group of enzymes that catalyze the hydrolysis of acyl-CoAs to the free fatty acid and coenzyme A (CoASH), providing the potential to regulate intracellular levels of acyl-CoAs, free fatty acids and CoASH. The protein is Putative cytosolic acyl coenzyme A thioester hydrolase-like (ACOT7L) of Homo sapiens (Human).